Consider the following 556-residue polypeptide: MHIERVPGIALSPSGAVAAYLGDWARVAPAYEYDWRRQESFERRAAYLTGGGYAGDRAAVAAALERYNRALGADEASLENARLLGRPETLAAVTGQQAGILTGPAYSIYKAMTTIRLARQQSQRLGVPVVPVFWIAGEDHDWHEVSWVMVPAGNETRRLALSERFDGERRSVALAPMPASVSDLIDEFAQLMPDTEFKEEVIAHLREAAVGGPALDPEATGGAPSLADWFGRLMAWVFRGTGLVFLNSSDPALRRIEAPFFARALQQQAEVEAACAAGVDRWERELGFACTVEQTPNSLNLFIYIDGERLPLLGEGDRVWVRGRPDLSWSRSELVDLALRSPERFSTNVVLRPVVQSYLLPDLFYVGGPGEISYFGLLRDVYRAMGRQMPVVVPREGFTLVEPPIARILQKHELTLDDAFHRLDDLRQELLEREDRLGIAQAFASFRQDFERRHAELAALVLQLDPGLGQVVEENRRQIEHQINRLEEKAKQQHRKNCETALRQFDRLKANLTPNGLQERAFSILPYLVKYGPDLVRRLVDEVPLEEGWSHRAIYL.

Coiled-coil stretches lie at residues 408–442 (ILQK…IAQA) and 468–513 (LGQV…ANLT).

Belongs to the BshC family.

In terms of biological role, involved in bacillithiol (BSH) biosynthesis. May catalyze the last step of the pathway, the addition of cysteine to glucosamine malate (GlcN-Mal) to generate BSH. The chain is Putative cysteine ligase BshC from Symbiobacterium thermophilum (strain DSM 24528 / JCM 14929 / IAM 14863 / T).